Consider the following 252-residue polypeptide: Protein Flattop homolog (252 aa).

A disordered region spans residues 177–252; it reads TEKRRRKRTI…EKERKAAKGH (76 aa). Residues 218 to 252 are compositionally biased toward basic and acidic residues; sequence PKDKPKDKPKDKEAGKKDKTKDKGKEKERKAAKGH.

This sequence belongs to the Flattop family.

This Drosophila melanogaster (Fruit fly) protein is Protein Flattop homolog.